We begin with the raw amino-acid sequence, 793 residues long: Protein smoothened (793 aa).

An N-terminal signal peptide occupies residues 1–32 (MAAGRPVRGPELAPRRLLQLLLLVLLGGPGRG). At 33–237 (AALSGNVTGP…EAEHQDMHSY (205 aa)) the chain is on the extracellular side. The disordered stretch occupies residues 35–61 (LSGNVTGPGPHSASGSSRRDVPVTSPP). Asparagine 38 is a glycosylation site (N-linked (GlcNAc...) asparagine). 5 cysteine pairs are disulfide-bonded: cysteine 68-cysteine 182, cysteine 74-cysteine 138, cysteine 82-cysteine 131, cysteine 122-cysteine 158, and cysteine 151-cysteine 173. Residues 69 to 185 (GRAAHCEPLR…DHFPEGCPNE (117 aa)) enclose the FZ domain. Residue aspartate 99 participates in cholesterol binding. The N-linked (GlcNAc...) asparagine glycan is linked to asparagine 192. Cystine bridges form between cysteine 197–cysteine 217, cysteine 221–cysteine 299, and cysteine 318–cysteine 394. A helical membrane pass occupies residues 238–258 (IAAFGAVTGLCTLFTLATFVA). At 259–265 (DWRNSNR) the chain is on the cytoplasmic side. Residues 266–286 (YPAVILFYVNACFFVGSIGWL) form a helical membrane-spanning segment. The Extracellular segment spans residues 287–318 (AQFMDGARREIVCRADGTMRFGEPTSSETLSC). Residues 319 to 339 (VIIFVIVYYALMAGVVWFVVL) traverse the membrane as a helical segment. The Cytoplasmic segment spans residues 340 to 362 (TYAWHTSFKALGTTYQPLSGKTS). Residues 363–383 (YFHLLTWSLPFVLTVAILAVA) form a helical membrane-spanning segment. Residues 384 to 406 (QVDGDSVSGICFVGYKNYRYRAG) are Extracellular-facing. Tyrosine 398 provides a ligand contact to cholesterol. The helical transmembrane segment at 407 to 427 (FVLAPIGLVLIVGGYFLIRGV) threads the bilayer. At 428-455 (MTLFSIKSNHPGLLSEKAASKINETMLR) the chain is on the cytoplasmic side. The chain crosses the membrane as a helical span at residues 456 to 476 (LGIFGFLAFGFVLITFSCHFY). Residues 477-528 (DFFNQAEWERSFRDYVLCQANVTIGLPTKKPIPDCEIKNRPSLLVEKINLFA) lie on the Extracellular side of the membrane. Cysteine 494 and cysteine 511 are disulfide-bonded. Asparagine 497 is a glycosylation site (N-linked (GlcNAc...) asparagine). A helical transmembrane segment spans residues 529–549 (MFGTGIAMSTWVWTKATLLIW). Residues 542 to 573 (TKATLLIWRRTWCRLTGHSDDEPKRIKKSKMI) form an interaction with BBS5 and BBS7 region. Topologically, residues 550 to 793 (RRTWCRLTGH…AEILDADSDF (244 aa)) are cytoplasmic. A phosphoserine mark is found at serine 560, serine 578, and serine 594. Residues 574–657 (AKAFSKRREL…TPVPPEEQAN (84 aa)) are required for interaction with PRKACA. The tract at residues 585-597 (QNPGQELSFSMHT) is interaction with DLG5. Residue threonine 597 is modified to Phosphothreonine. Phosphoserine occurs at positions 599 and 642. 2 positions are modified to phosphothreonine: threonine 644 and threonine 648. Serine 666 is subject to Phosphoserine. Residues 674–684 (GRKKKRRKRKK) show a composition bias toward basic residues. The tract at residues 674–703 (GRKKKRRKRKKEVCPLRPAPELHHSAPVPA) is disordered.

It belongs to the G-protein coupled receptor Fz/Smo family. In terms of assembly, homodimer. Interacts (via C-terminus) with protein kinase A catalytic subunit PRKACA; interacts with free PRKACA subunits and the interaction leads to sequestration of PRKACA at the membrane, preventing PRKACA-mediated phosphorylation of GLI transcription factors. Interacts with ARRB2. Interacts with BBS5 and BBS7; the interactions are indicative for the association of SMO with the BBsome complex to facilitate ciliary localization of SMO. Interacts with KIF7, DLG5 and SDCBP. Interacts with GAS8/DRC4. In terms of processing, phosphorylation by GRK kinases is required for interaction with protein kinase A catalytic subunit PRKACA. During early somite stages of embryonic development, modestly up-regulated in the cells of the node (at protein level).

It is found in the cell membrane. The protein localises to the cell projection. Its subcellular location is the cilium. Its function is as follows. G protein-coupled receptor which associates with the patched protein (PTCH) to transduce hedgehog protein signaling. Binding of sonic hedgehog (SHH) to its receptor patched prevents inhibition of smoothened (SMO) by patched. When active, SMO binds to and sequesters protein kinase A catalytic subunit PRKACA at the cell membrane, preventing PRKACA-mediated phosphorylation of GLI transcription factors which releases the GLI proteins from PRKACA-mediated inhibition and allows for transcriptional activation of hedgehog pathway target genes. Required for the accumulation of KIF7, GLI2 and GLI3 in the cilia. Interacts with DLG5 at the ciliary base to induce the accumulation of KIF7 and GLI2 at the ciliary tip for GLI2 activation. The protein is Protein smoothened (Smo) of Mus musculus (Mouse).